Reading from the N-terminus, the 249-residue chain is Probable septum site-determining protein MinC (249 aa).

Residues 89 to 130 are disordered; sequence SLFEPGMPPAMKGGRPAPDFEVPEVDPADPPKAGKGKAAAPI. A compositionally biased stretch (low complexity) spans 119-129; the sequence is PKAGKGKAAAP.

The protein belongs to the MinC family. Interacts with MinD and FtsZ.

Functionally, cell division inhibitor that blocks the formation of polar Z ring septums. Rapidly oscillates between the poles of the cell to destabilize FtsZ filaments that have formed before they mature into polar Z rings. Prevents FtsZ polymerization. In Rhizobium meliloti (strain 1021) (Ensifer meliloti), this protein is Probable septum site-determining protein MinC.